We begin with the raw amino-acid sequence, 264 residues long: Cytosolic Fe-S cluster assembly factor Nubp2 homolog (264 aa).

Residue 14–21 (GKGGVGKS) participates in ATP binding. Residues Cys188 and Cys191 each contribute to the [4Fe-4S] cluster site.

The protein belongs to the Mrp/NBP35 ATP-binding proteins family. NUBP2/CFD1 subfamily. In terms of assembly, heterotetramer of 2 Nubp1 and 2 Nubp2 chains. [4Fe-4S] cluster is required as a cofactor.

It localises to the cytoplasm. Functionally, component of the cytosolic iron-sulfur (Fe/S) protein assembly (CIA) machinery. Required for maturation of extramitochondrial Fe-S proteins. The Nubp1-Nubp2 heterotetramer forms a Fe-S scaffold complex, mediating the de novo assembly of an Fe-S cluster and its transfer to target apoproteins. This is Cytosolic Fe-S cluster assembly factor Nubp2 homolog from Drosophila grimshawi (Hawaiian fruit fly).